The chain runs to 278 residues: Undecaprenyl-diphosphatase 2 (278 aa).

The next 7 helical transmembrane spans lie at 43–63 (GAAF…VYFW), 88–108 (ARLG…GLFF), 119–139 (LYIT…ADRI), 149–169 (LIWR…IPGV), 194–214 (FLLA…KSIG), 226–246 (LATL…LKLV), and 254–274 (FVWY…TGVI).

This sequence belongs to the UppP family.

It is found in the cell inner membrane. The catalysed reaction is di-trans,octa-cis-undecaprenyl diphosphate + H2O = di-trans,octa-cis-undecaprenyl phosphate + phosphate + H(+). Functionally, catalyzes the dephosphorylation of undecaprenyl diphosphate (UPP). Confers resistance to bacitracin. This is Undecaprenyl-diphosphatase 2 from Agrobacterium fabrum (strain C58 / ATCC 33970) (Agrobacterium tumefaciens (strain C58)).